Reading from the N-terminus, the 1244-residue chain is MNSVFYNPFGRGAYAQPPIAWRPRRRAAPAPRPSGLTTQIQQLTRAVRALVLDNATRRQRPAPRTRPRKPKTQKPKPKKQNQKPPQQQKKGKNQPQQPKKPKPGKRQRTALKFEADRTFVGKNEDGKIMGYAVAMEGKVIKPLHVKGTIDHPALAKLKFTKSSSYDMEFAKLPTEMKSDAFGYTTEHPEVFYNWHHGAVQFSGGRFTIPTGVGGPGDSGRPILDNSGKVVAIVLGGANEVPGTALSVVTWNKKGAAIKTTHEDTVEWSRAITAMCILQNVTFPCDRPPTCYNRNPDLTLTMLETNVNHPSYDVLLDAALRCPTRRHVRSTPTDDFTLTAPYLGLCHRCKTMEPCYSPIKIEKVWDDADDGVLRIQVSAQLGYNRAGTAASARLRFMGGGVPPEIQEGAIADFKVFTSKPCLHLSHKGYFVIVKCPPGDSITTSLKVHGSDQTCTIPMRVGYKFVGREKYTLPPMHGTQIPCLTYERTREKSAGYVTMHRPGQQSITMLMEESGGEVYVQPTSGRNVTYECKCGDFKTGTVTARTKIDGCTERKQCIAISADHVKWVFNSPDLIRHTDHTAQGKLHIPFPLQQAQCTVPLAHLPGVKHAYRSMSLTLHAEHPTLLTTRHLGENPQPTAEWIVGSVTRNFSITIQGFEYTWGNQKPVRVYAQESAPGNPHGWPHEIVRHYYHLYPFYTVTVLSGMGLAICAGLVISILCCCKARRDCLTPYQLAPNATVPFLVTLCCCFQRTSADEFTDTMGYLWQHSQTMFWIQLVIPLAAVITLVRCCSCCLPFLLVASPPNKADAYEHTITVPNAPLNSYKALVERPGYAPLNLEVMVMNTQIIPSVKREYITCRYHTVVPSPQIKCCGTVECPKGEKADYTCKVFTGVYPFLWGGAQCFCDSENSQLSDKYVELSTDCATDHAEAVRVHTASVKSQLRITYGNSTAQVDVFVNGVTPARSKDMKLIAGPLSTTFSPFDNKVIIYHGKVYNYDFPEFGAGTPGAFGDVQASSTTGSDLLANTAIHLQRPEARNIHVPYTQAPSGFEFWKNNSGQPLSDTAPFGCKVNVNPLRADKCAVGSLPISVDIPDAAFTRVSEPLPSLLKCTVTSCTYSTDYGGVLVLTYESDRAGQCAVHSHSSTAVLRDPSVYVEQKGETTLKFSTRSLQADFEVSMCGTRTTCHAQCQPPTEHVMNRPQKSTPDFSSAISKTSWNWITALMGGISSIAAIAAIVLVIALVFTAQHR.

Residues 1-113 form a disordered region; it reads MNSVFYNPFG…GKRQRTALKF (113 aa). The span at 35–44 shows a compositional bias: polar residues; sequence GLTTQIQQLT. The segment at 35–69 is host transcription inhibition; the sequence is GLTTQIQQLTRAVRALVLDNATRRQRPAPRTRPRK. Over residues 57 to 81 the composition is skewed to basic residues; sequence RRQRPAPRTRPRKPKTQKPKPKKQN. The short motif at 62 to 103 is the Nuclear localization signal element; sequence APRTRPRKPKTQKPKPKKQNQKPPQQQKKGKNQPQQPKKPKP. Residues 82 to 97 are compositionally biased toward low complexity; sequence QKPPQQQKKGKNQPQQ. The interval 85 to 118 is binding to the viral RNA; the sequence is PQQQKKGKNQPQQPKKPKPGKRQRTALKFEADRT. Residues 99–109 show a composition bias toward basic residues; it reads KKPKPGKRQRT. Residues 103–117 form a ribosome-binding region; sequence PGKRQRTALKFEADR. Positions 117 to 267 constitute a Peptidase S3 domain; that stretch reads RTFVGKNEDG…KTTHEDTVEW (151 aa). The active-site Charge relay system is the His144. The Nuclear export signal signature appears at 149–159; the sequence is IDHPALAKLKF. The interval 160–165 is interaction with spike glycoprotein E2; that stretch reads TKSSSY. The active-site Charge relay system is Asp166. The segment at 188–198 is dimerization of the capsid protein; it reads PEVFYNWHHGA. The Charge relay system role is filled by Ser218. Residues 224–228 are dimerization of the capsid protein; sequence DNSGK. An interaction with spike glycoprotein E2 region spans residues 252-256; sequence KKGAA. The tract at residues 268–280 is functions as an uncleaved signal peptide for the precursor of protein E3/E2; the sequence is SRAITAMCILQNV. Residues 268-696 lie on the Extracellular side of the membrane; the sequence is SRAITAMCIL…HYYHLYPFYT (429 aa). The N-linked (GlcNAc...) asparagine; by host glycan is linked to Asn279. 4 disulfide bridges follow: Cys284–Cys290, Cys481–Cys595, Cys530–Cys555, and Cys532–Cys549. Asn525 carries N-linked (GlcNAc...) asparagine; by host glycosylation. The N-linked (GlcNAc...) asparagine; by host glycan is linked to Asn647. A helical transmembrane segment spans residues 697–717; that stretch reads VTVLSGMGLAICAGLVISILC. Topologically, residues 718 to 751 are cytoplasmic; it reads CCKARRDCLTPYQLAPNATVPFLVTLCCCFQRTS. Positions 720–724 are interaction with the capsid protein; that stretch reads KARRD. Residues Cys725, Cys745, and Cys746 are each lipidated (S-palmitoyl cysteine; by host). Cysteines 725 and 746 form a disulfide. Topologically, residues 752–764 are extracellular; it reads ADEFTDTMGYLWQ. The next 2 helical transmembrane spans lie at 765–785 and 786–805; these read HSQT…ITLV and RCCS…NKAD. Residues 806–1218 are Extracellular-facing; sequence AYEHTITVPN…KTSWNWITAL (413 aa). Disulfide bonds link Cys855–Cys920, Cys868–Cys900, Cys869–Cys902, and Cys874–Cys884. Residues 890–907 form an E1 fusion peptide loop region; the sequence is VYPFLWGGAQCFCDSENS. N-linked (GlcNAc...) asparagine; by host glycosylation is found at Asn945 and Asn1051. 4 disulfide bridges follow: Cys1065/Cys1077, Cys1106/Cys1181, Cys1111/Cys1185, and Cys1133/Cys1175. A helical transmembrane segment spans residues 1219-1239; the sequence is MGGISSIAAIAAIVLVIALVF. Topologically, residues 1240 to 1244 are cytoplasmic; sequence TAQHR.

Homodimer. Homomultimer. Interacts with host karyopherin KPNA4; this interaction allows the nuclear import of the viral capsid protein. Interacts with spike glycoprotein E2. Interacts with host IRAK1; the interaction leads to inhibition of IRAK1-dependent signaling. In terms of assembly, the precursor of protein E3/E2 and E1 form a heterodimer shortly after synthesis. As to quaternary structure, the precursor of protein E3/E2 and E1 form a heterodimer shortly after synthesis. Processing of the precursor of protein E3/E2 into E2 and E3 results in a heterodimer of the spike glycoproteins E2 and E1. Spike at virion surface are constituted of a trimer of E2-E1 heterodimers. After target cell attachment and endocytosis, E1 change conformation to form homotrimers. Interacts with 6K protein. Interacts with spike glycoprotein E1. Processing of the precursor of protein E3/E2 into E2 and E3 results in a heterodimer of the spike glycoproteins E2 and E1. Spike at virion surface are constituted of a trimer of E2-E1 heterodimers. Interacts with 6K protein. In terms of assembly, oligomer. Interacts with spike glycoprotein E1. Interacts with spike glycoprotein E2. Structural polyprotein: Specific enzymatic cleavages in vivo yield mature proteins. Capsid protein is auto-cleaved during polyprotein translation, unmasking a signal peptide at the N-terminus of the precursor of E3/E2. The remaining polyprotein is then targeted to the host endoplasmic reticulum, where host signal peptidase cleaves it into pE2, 6K and E1 proteins. pE2 is further processed to mature E3 and E2 by host furin in trans-Golgi vesicle. Post-translationally, palmitoylated via thioester bonds. These palmitoylations may induce disruption of the C-terminus transmembrane. This would result in the reorientation of E2 C-terminus from lumenal to cytoplasmic side. In terms of processing, N-glycosylated. Palmitoylated via thioester bonds.

Its subcellular location is the virion. It localises to the host cytoplasm. The protein localises to the host cell membrane. It is found in the host nucleus. The protein resides in the virion membrane. Its subcellular location is the host Golgi apparatus. It localises to the host trans-Golgi network. The protein localises to the host endoplasmic reticulum. It catalyses the reaction Autocatalytic release of the core protein from the N-terminus of the togavirus structural polyprotein by hydrolysis of a -Trp-|-Ser- bond.. Functionally, forms an icosahedral capsid with a T=4 symmetry composed of 240 copies of the capsid protein surrounded by a lipid membrane through which penetrate 80 spikes composed of trimers of E1-E2 heterodimers. The capsid protein binds to the viral RNA genome at a site adjacent to a ribosome binding site for viral genome translation following genome release. Possesses a protease activity that results in its autocatalytic cleavage from the nascent structural protein. Following its self-cleavage, the capsid protein transiently associates with ribosomes, and within several minutes the protein binds to viral RNA and rapidly assembles into icosahedric core particles. The resulting nucleocapsid eventually associates with the cytoplasmic domain of the spike glycoprotein E2 at the cell membrane, leading to budding and formation of mature virions. In case of infection, new virions attach to target cells and after clathrin-mediated endocytosis their membrane fuses with the host endosomal membrane. This leads to the release of the nucleocapsid into the cytoplasm, followed by an uncoating event necessary for the genomic RNA to become accessible. The uncoating might be triggered by the interaction of capsid proteins with ribosomes. Binding of ribosomes would release the genomic RNA since the same region is genomic RNA-binding and ribosome-binding. Specifically inhibits interleukin-1 receptor-associated kinase 1/IRAK1-dependent signaling during viral entry, representing a means by which the alphaviruses may evade innate immune detection and activation prior to viral gene expression. In terms of biological role, provides the signal sequence for the translocation of the precursor of protein E3/E2 to the host endoplasmic reticulum. Furin-cleaved E3 remains associated with spike glycoprotein E1 and mediates pH protection of the latter during the transport via the secretory pathway. After virion release from the host cell, the assembly protein E3 is gradually released in the extracellular space. Plays a role in viral attachment to target host cell, by binding to the cell receptor. Synthesized as a p62 precursor which is processed by furin at the cell membrane just before virion budding, giving rise to E2-E1 heterodimer. The p62-E1 heterodimer is stable, whereas E2-E1 is unstable and dissociate at low pH. p62 is processed at the last step, presumably to avoid E1 fusion activation before its final export to cell surface. E2 C-terminus contains a transitory transmembrane that would be disrupted by palmitoylation, resulting in reorientation of the C-terminal tail from lumenal to cytoplasmic side. This step is critical since E2 C-terminus is involved in budding by interacting with capsid proteins. This release of E2 C-terminus in cytoplasm occurs lately in protein export, and precludes premature assembly of particles at the endoplasmic reticulum membrane. Its function is as follows. Acts as a viroporin that participates in virus glycoprotein processing and transport to the plasma membrane, cell permeabilization and budding of viral particles. Disrupts the calcium homeostasis of the cell, probably at the endoplasmic reticulum level. This leads to cytoplasmic calcium elevation. Because of its lipophilic properties, the 6K protein is postulated to influence the selection of lipids that interact with the transmembrane domains of the glycoproteins, which, in turn, affects the deformability of the bilayer required for the extreme curvature that occurs as budding proceeds. Present in low amount in virions, about 3% compared to viral glycoproteins. Functionally, class II viral fusion protein. Fusion activity is inactive as long as E1 is bound to E2 in mature virion. After virus attachment to target cell and endocytosis, acidification of the endosome induce dissociation of E1/E2 heterodimer and concomitant trimerization of the E1 subunits. This E1 trimer is fusion active, and promotes release of viral nucleocapsid in cytoplasm after endosome and viral membrane fusion. Efficient fusion requires the presence of cholesterol and sphingolipid in the target membrane. In Aedes (AURAV), this protein is Structural polyprotein.